The following is a 402-amino-acid chain: Imidazolonepropionase (402 aa).

2 residues coordinate Fe(3+): H66 and H68. Residues H66 and H68 each contribute to the Zn(2+) site. Positions 75, 138, and 171 each coordinate 4-imidazolone-5-propanoate. Y138 serves as a coordination point for N-formimidoyl-L-glutamate. H236 is a binding site for Fe(3+). Zn(2+) is bound at residue H236. Residue Q239 coordinates 4-imidazolone-5-propanoate. D311 provides a ligand contact to Fe(3+). D311 contributes to the Zn(2+) binding site. N-formimidoyl-L-glutamate is bound by residues N313 and G315. Residue T316 participates in 4-imidazolone-5-propanoate binding.

Belongs to the metallo-dependent hydrolases superfamily. HutI family. The cofactor is Zn(2+). It depends on Fe(3+) as a cofactor.

It is found in the cytoplasm. It carries out the reaction 4-imidazolone-5-propanoate + H2O = N-formimidoyl-L-glutamate. Its pathway is amino-acid degradation; L-histidine degradation into L-glutamate; N-formimidoyl-L-glutamate from L-histidine: step 3/3. In terms of biological role, catalyzes the hydrolytic cleavage of the carbon-nitrogen bond in imidazolone-5-propanoate to yield N-formimidoyl-L-glutamate. It is the third step in the universal histidine degradation pathway. This Pseudomonas paraeruginosa (strain DSM 24068 / PA7) (Pseudomonas aeruginosa (strain PA7)) protein is Imidazolonepropionase.